Here is a 1083-residue protein sequence, read N- to C-terminus: Solute carrier family 12 member 7 (1083 aa).

The segment at 1–52 is disordered; the sequence is MPTNFTVVPVEAHADGGGDETAERTEAPGTPEGPEPERPSPGDGNPRENSPF. Residues 1-119 lie on the Cytoplasmic side of the membrane; that stretch reads MPTNFTVVPV…RREAKAPRMG (119 aa). The span at 12 to 26 shows a compositional bias: basic and acidic residues; that stretch reads AHADGGGDETAERTE. Thr-30 bears the Phosphothreonine mark. Phosphoserine is present on residues Ser-50 and Ser-62. The chain crosses the membrane as a discontinuously helical span at residues 120–142; it reads TFIGVYLPCLQNILGVILFLRLT. K(+)-binding residues include Asn-131 and Ile-132. Position 135 (Val-135) interacts with chloride. Residues 143–149 lie on the Extracellular side of the membrane; the sequence is WIVGVAG. Residues 150–172 traverse the membrane as a helical segment; that stretch reads VLESFLIVAMCCTCTMLTAISMS. The Cytoplasmic segment spans residues 173–196; the sequence is AIATNGVVPAGGSYYMISRSLGPE. Residues 197–225 form a helical membrane-spanning segment; the sequence is FGGAVGLCFYLGTTFAGAMYILGTIEIFL. Residues 226–249 lie on the Extracellular side of the membrane; that stretch reads TYISPGAAIFQAEAAGGEAAAMLH. Helical transmembrane passes span 250 to 270 and 272 to 300; these read NMRV…FVGV and YVNK…KSAF. The Extracellular portion of the chain corresponds to 301–419; it reads DPPDIPVCLL…PYVLTDIAAS (119 aa). 2 disulfides stabilise this stretch: Cys-308-Cys-323 and Cys-343-Cys-352. N-linked (GlcNAc...) asparagine glycosylation occurs at Asn-312. Asn-360 carries an N-linked (GlcNAc...) asparagine glycan. Residues 420 to 440 traverse the membrane as a helical segment; the sequence is FTLLVGIYFPSVTGIMAGSNR. 2 residues coordinate K(+): Pro-429 and Thr-432. Pro-429 serves as a coordination point for chloride. Chloride contacts are provided by Gly-433 and Ile-434. The Cytoplasmic portion of the chain corresponds to 441–450; that stretch reads SGDLKDAQKS. Residues 451–473 traverse the membrane as a helical segment; it reads IPTGTILAIVTTSFIYLSCIVLF. Residues 474 to 504 are Extracellular-facing; sequence GACIEGVVLRDKFGEALQGNLVIGMLAWPSP. Residues 505–531 form a helical membrane-spanning segment; sequence WVIVIGSFFSTCGAGLQSLTGAPRLLQ. Over 532–554 the chain is Cytoplasmic; the sequence is AIARDGIVPFLQVFGHGKANGEP. 2 helical membrane passes run 555–571 and 574–598; these read TWAL…GILI and LDSV…ACAV. Tyr-589 contacts chloride. The Cytoplasmic segment spans residues 599–612; sequence QTLLRTPNWRPRFK. 2 consecutive transmembrane segments (helical) span residues 613 to 632 and 636 to 651; these read FYHW…LMFI and YYAL…IYKY. The Cytoplasmic portion of the chain corresponds to 652–1083; the sequence is IEYRGAEKEW…GGREVITIYS (432 aa). A scissor helix region spans residues 664-680; the sequence is GIRGLSLNAARYALLRV. 2 positions are modified to phosphothreonine: Thr-973 and Thr-980.

The protein belongs to the SLC12A transporter family. K/Cl co-transporter subfamily. As to quaternary structure, homodimer; adopts a domain-swap conformation at the scissor helices connecting the transmembrane domain and C-terminal domain. Heterodimer with K-Cl cotransporter SLC12A5. As to expression, detected in muscle, brain, lung, heart and kidney.

It localises to the cell membrane. It catalyses the reaction K(+)(in) + chloride(in) = K(+)(out) + chloride(out). Activated by N-ethylmaleimide (NEM). Inhibited by furosemide, DIDS and bumetanide. The inhibition is much stronger in the presence of 50 mM K(+) in the uptake medium. Inhibited by DIOA. Inhibited by WNK3. Functionally, mediates electroneutral potassium-chloride cotransport when activated by cell swelling. May mediate K(+) uptake into Deiters' cells in the cochlea and contribute to K(+) recycling in the inner ear. Important for the survival of cochlear outer and inner hair cells and the maintenance of the organ of Corti. May be required for basolateral Cl(-) extrusion in the kidney and contribute to renal acidification. The sequence is that of Solute carrier family 12 member 7 from Homo sapiens (Human).